Reading from the N-terminus, the 177-residue chain is MSRVGKKPVTVPAGVTATVDGQNVKIKGAKGELSFRVPDLVEVSHADGAISVQPRSQTKEARAMWGLSRAQVANLIEGVTKGFEKKLEINGVGYRAAVAGKVLKLSLGYSHDVEYEIPAGITITTPRPVEIIVAGIDKQRVGQIAAEIREYRGPEPYKGKGVKYSDEFIFRKEGKKK.

Belongs to the universal ribosomal protein uL6 family. In terms of assembly, part of the 50S ribosomal subunit.

Functionally, this protein binds to the 23S rRNA, and is important in its secondary structure. It is located near the subunit interface in the base of the L7/L12 stalk, and near the tRNA binding site of the peptidyltransferase center. This chain is Large ribosomal subunit protein uL6, found in Methylobacterium sp. (strain 4-46).